A 46-amino-acid chain; its full sequence is Mu-segestritoxin-Sf1d (46 aa).

4 cysteine pairs are disulfide-bonded: cysteine 3-cysteine 19, cysteine 10-cysteine 22, cysteine 18-cysteine 42, and cysteine 24-cysteine 40. Positions 31–33 (RPW) are keys region for toxin activity.

It belongs to the neurotoxin 16 (SFI) family. As to expression, expressed by the venom gland.

The protein localises to the secreted. Functionally, insecticidal toxin. It inhibits insect voltage-gated sodium channels (Nav) by partially blocking the channel pore in DUM neurons from the American cockroach, not by acting as a gating modifier. The inhibition is only partially reversible after prolonged washout. In vivo, the toxin causes flaccid paralysis followed by death when injected into Heliothis virescens larvae. It also causes uncoordinated movements followed by full paralysis to sheep blowflies (Lucilia cuprina). When the toxin is fused to snowdrop lectin, it is orally active against larvae of the tomato moth (Laconobia oleracea), the rice brown planthopper (Nilaparvata lugens), and the peach-potato aphid (Myzus persicae). This chain is Mu-segestritoxin-Sf1d, found in Segestria florentina (Tube-web spider).